The chain runs to 809 residues: Zinc finger CCCH domain-containing protein 24 (809 aa).

Residue Met1 is modified to N-acetylmethionine. The interval 1 to 74 is disordered; it reads METSSIEINE…NLESSDTKIT (74 aa). The segment covering 30 to 46 has biased composition (polar residues); that stretch reads ETSSIDELPSSDSNATD. Positions 51–65 are enriched in basic and acidic residues; sequence VGEKRKRADEDEKTN. The C3H1-type zinc-finger motif lies at 79–107; the sequence is WWKTSLCSYFRREASCSHGNECKYAHGEA. Residues Gln536 and Glu586 each coordinate S-adenosyl-L-methionine. The tract at residues 652–693 is disordered; that stretch reads EEMTNSEHVADQNLPPSNTQVEELQDNEQKDSSSLEPEKTTK. Residues 678-692 show a composition bias toward basic and acidic residues; sequence NEQKDSSSLEPEKTT. S-adenosyl-L-methionine is bound at residue Asp704. Cys732 serves as the catalytic Nucleophile.

The protein belongs to the class I-like SAM-binding methyltransferase superfamily. RNA M5U methyltransferase family.

The protein is Zinc finger CCCH domain-containing protein 24 of Arabidopsis thaliana (Mouse-ear cress).